Reading from the N-terminus, the 164-residue chain is Rhomboid-related protein 1 (164 aa).

4 consecutive transmembrane segments (helical) span residues 10-30 (GFNA…HGVL), 32-52 (ISLL…ITDM), 56-76 (VVGG…NVVM), and 120-140 (PSFM…LTIL). Catalysis depends on serine 60, which acts as the Nucleophile. The active site involves histidine 125.

The protein belongs to the peptidase S54 family.

It is found in the membrane. The catalysed reaction is Cleaves type-1 transmembrane domains using a catalytic dyad composed of serine and histidine that are contributed by different transmembrane domains.. Functionally, may be involved in regulated intramembrane proteolysis and the subsequent release of functional polypeptides from their membrane anchors. This Rattus norvegicus (Rat) protein is Rhomboid-related protein 1 (Rhbdl1).